A 460-amino-acid chain; its full sequence is UDP-N-acetylmuramoylalanine--D-glutamate ligase (460 aa).

Position 120–126 (120–126 (GSNGKTT)) interacts with ATP.

This sequence belongs to the MurCDEF family.

It localises to the cytoplasm. It catalyses the reaction UDP-N-acetyl-alpha-D-muramoyl-L-alanine + D-glutamate + ATP = UDP-N-acetyl-alpha-D-muramoyl-L-alanyl-D-glutamate + ADP + phosphate + H(+). The protein operates within cell wall biogenesis; peptidoglycan biosynthesis. Functionally, cell wall formation. Catalyzes the addition of glutamate to the nucleotide precursor UDP-N-acetylmuramoyl-L-alanine (UMA). The polypeptide is UDP-N-acetylmuramoylalanine--D-glutamate ligase (Lactobacillus delbrueckii subsp. bulgaricus (strain ATCC 11842 / DSM 20081 / BCRC 10696 / JCM 1002 / NBRC 13953 / NCIMB 11778 / NCTC 12712 / WDCM 00102 / Lb 14)).